The primary structure comprises 571 residues: Dehydrocurvularin exporter (571 aa).

The tract at residues 1 to 34 (MADGSDLENNHKPELDRSQPGSTSNGSQEQKDPD) is disordered. Over residues 8 to 17 (ENNHKPELDR) the composition is skewed to basic and acidic residues. Positions 19–28 (QPGSTSNGSQ) are enriched in polar residues. Asn-25 carries N-linked (GlcNAc...) asparagine glycosylation. The next 14 helical transmembrane spans lie at 47–67 (ILVM…IGII), 86–106 (WYGS…GKLF), 120–140 (FIFL…SVII), 143–163 (AIQG…INYV), 171–191 (LLIG…PVIG), 202–222 (WCFW…LLFL), 238–258 (IILA…VCLT), 275–295 (VIAT…TEWF), 317–337 (LFCL…PIYF), 350–370 (VNTL…GGVI), 379–399 (FELL…ILDV), 405–425 (MYIG…QIPM), 443–463 (IMVM…QSLF), and 514–534 (VFAF…IIPF). The interval 538–571 (PDHGKKDKPATEEAAEEKSEAEGKVSGDKEENHS) is disordered.

The protein belongs to the major facilitator superfamily. TCR/Tet family.

It is found in the cell membrane. Functionally, efflux pump that is probably involved in the export of dehydrocurvularin. The protein is Dehydrocurvularin exporter of Aspergillus terreus.